A 109-amino-acid polypeptide reads, in one-letter code: Small ribosomal subunit protein bS6c (109 aa).

It belongs to the bacterial ribosomal protein bS6 family.

The protein localises to the plastid. It localises to the chloroplast. Its function is as follows. Binds together with bS18 to 16S ribosomal RNA. This is Small ribosomal subunit protein bS6c from Pyropia yezoensis (Susabi-nori).